The chain runs to 100 residues: NAD(P)H-quinone oxidoreductase subunit 4L, chloroplastic (100 aa).

Transmembrane regions (helical) follow at residues 1 to 21 (MFGHALLLGAFPFCIGIYGLI), 29 to 49 (ALMCLELIFNAVNVNFVTFPN), and 63 to 83 (VFVIAVAAAEAAIGSAIVLAI).

This sequence belongs to the complex I subunit 4L family. NDH is composed of at least 16 different subunits, 5 of which are encoded in the nucleus.

It is found in the plastid. The protein resides in the chloroplast thylakoid membrane. The catalysed reaction is a plastoquinone + NADH + (n+1) H(+)(in) = a plastoquinol + NAD(+) + n H(+)(out). The enzyme catalyses a plastoquinone + NADPH + (n+1) H(+)(in) = a plastoquinol + NADP(+) + n H(+)(out). NDH shuttles electrons from NAD(P)H:plastoquinone, via FMN and iron-sulfur (Fe-S) centers, to quinones in the photosynthetic chain and possibly in a chloroplast respiratory chain. The immediate electron acceptor for the enzyme in this species is believed to be plastoquinone. Couples the redox reaction to proton translocation, and thus conserves the redox energy in a proton gradient. The sequence is that of NAD(P)H-quinone oxidoreductase subunit 4L, chloroplastic from Huperzia lucidula (Shining clubmoss).